The primary structure comprises 421 residues: Gamma-glutamyl phosphate reductase (421 aa).

The protein belongs to the gamma-glutamyl phosphate reductase family.

It localises to the cytoplasm. The catalysed reaction is L-glutamate 5-semialdehyde + phosphate + NADP(+) = L-glutamyl 5-phosphate + NADPH + H(+). It functions in the pathway amino-acid biosynthesis; L-proline biosynthesis; L-glutamate 5-semialdehyde from L-glutamate: step 2/2. Catalyzes the NADPH-dependent reduction of L-glutamate 5-phosphate into L-glutamate 5-semialdehyde and phosphate. The product spontaneously undergoes cyclization to form 1-pyrroline-5-carboxylate. The sequence is that of Gamma-glutamyl phosphate reductase from Azotobacter vinelandii (strain DJ / ATCC BAA-1303).